Reading from the N-terminus, the 419-residue chain is Pyrophosphate--fructose 6-phosphate 1-phosphotransferase (419 aa).

Gly12 is a binding site for diphosphate. Asp107 serves as a coordination point for Mg(2+). Substrate contacts are provided by residues 132 to 134 (TID), 178 to 180 (MGR), Glu238, and 300 to 303 (YELR). Asp134 (proton acceptor) is an active-site residue.

Belongs to the phosphofructokinase type A (PFKA) family. PPi-dependent PFK group II subfamily. Clade 'Short' sub-subfamily. As to quaternary structure, homodimer. Mg(2+) is required as a cofactor. Co(2+) serves as cofactor. It depends on Mn(2+) as a cofactor. Requires Ni(2+) as cofactor.

It localises to the cytoplasm. The enzyme catalyses beta-D-fructose 6-phosphate + diphosphate = beta-D-fructose 1,6-bisphosphate + phosphate + H(+). Its pathway is carbohydrate degradation; glycolysis; D-glyceraldehyde 3-phosphate and glycerone phosphate from D-glucose: step 3/4. Non-allosteric. Functionally, catalyzes the phosphorylation of D-fructose 6-phosphate, the first committing step of glycolysis. Uses inorganic phosphate (PPi) as phosphoryl donor instead of ATP like common ATP-dependent phosphofructokinases (ATP-PFKs), which renders the reaction reversible, and can thus function both in glycolysis and gluconeogenesis. Consistently, PPi-PFK can replace the enzymes of both the forward (ATP-PFK) and reverse (fructose-bisphosphatase (FBPase)) reactions. The sequence is that of Pyrophosphate--fructose 6-phosphate 1-phosphotransferase from Thermotoga maritima (strain ATCC 43589 / DSM 3109 / JCM 10099 / NBRC 100826 / MSB8).